A 447-amino-acid chain; its full sequence is UPF0210 protein lhv_0606 (447 aa).

It belongs to the UPF0210 family. Homodimer.

The polypeptide is UPF0210 protein lhv_0606 (Lactobacillus helveticus (strain DPC 4571)).